Here is a 417-residue protein sequence, read N- to C-terminus: Gamma-glutamyl phosphate reductase (417 aa).

It belongs to the gamma-glutamyl phosphate reductase family.

The protein resides in the cytoplasm. It catalyses the reaction L-glutamate 5-semialdehyde + phosphate + NADP(+) = L-glutamyl 5-phosphate + NADPH + H(+). It functions in the pathway amino-acid biosynthesis; L-proline biosynthesis; L-glutamate 5-semialdehyde from L-glutamate: step 2/2. Catalyzes the NADPH-dependent reduction of L-glutamate 5-phosphate into L-glutamate 5-semialdehyde and phosphate. The product spontaneously undergoes cyclization to form 1-pyrroline-5-carboxylate. In Meiothermus ruber, this protein is Gamma-glutamyl phosphate reductase.